Consider the following 522-residue polypeptide: Ribose import ATP-binding protein RbsA 1 (522 aa).

ABC transporter domains follow at residues 8–243 and 249–496; these read LRIE…GRSI and RERP…VSTN. An ATP-binding site is contributed by 40-47; sequence GENGAGKS. Residues 492–522 are disordered; sequence AVSTNQYKPDKSDKPDASAGKTDQKEAPRGH. Over residues 499-522 the composition is skewed to basic and acidic residues; that stretch reads KPDKSDKPDASAGKTDQKEAPRGH.

It belongs to the ABC transporter superfamily. Ribose importer (TC 3.A.1.2.1) family. The complex is composed of an ATP-binding protein (RbsA), two transmembrane proteins (RbsC) and a solute-binding protein (RbsB).

It localises to the cell membrane. It carries out the reaction D-ribose(out) + ATP + H2O = D-ribose(in) + ADP + phosphate + H(+). Part of the ABC transporter complex RbsABC involved in ribose import. Responsible for energy coupling to the transport system. The chain is Ribose import ATP-binding protein RbsA 1 from Streptomyces avermitilis (strain ATCC 31267 / DSM 46492 / JCM 5070 / NBRC 14893 / NCIMB 12804 / NRRL 8165 / MA-4680).